A 698-amino-acid polypeptide reads, in one-letter code: Nitric oxide-associated protein 1 (698 aa).

Residues 42–66 (FQHSSSLGRELPYDPVDTEGFGEGG) form a disordered region. Position 77 is a phosphotyrosine (tyrosine 77). Disordered regions lie at residues 80 to 134 (DPEP…DPAL) and 279 to 306 (LAPG…PNWS). The segment covering 102-126 (ERQRQQRREERRQQNLRARSREHPV) has biased composition (basic and acidic residues). The CP-type G domain maps to 202–503 (LELVSAALRR…FYDTPGITKE (302 aa)).

The protein belongs to the TRAFAC class YlqF/YawG GTPase family. NOA1 subfamily. Homodimer or multimer. Interacts with mitochondrial complex I, DAP3, MRPL12 and MRPS27.

The protein resides in the mitochondrion inner membrane. Its function is as follows. Involved in regulation of mitochondrial protein translation and respiration. Plays a role in mitochondria-mediated cell death. May act as a scaffolding protein or stabilizer of respiratory chain supercomplexes. Binds GTP. The protein is Nitric oxide-associated protein 1 (NOA1) of Homo sapiens (Human).